A 279-amino-acid chain; its full sequence is Shikimate dehydrogenase (NADP(+)) (279 aa).

Residues 20–22 and T67 each bind shikimate; that span reads SRS. K71 functions as the Proton acceptor in the catalytic mechanism. D83 contacts NADP(+). Shikimate contacts are provided by N92 and D108. NADP(+) is bound by residues 134-138 and L223; that span reads GAGGA. Y225 lines the shikimate pocket. NADP(+) is bound at residue G246.

This sequence belongs to the shikimate dehydrogenase family. In terms of assembly, homodimer.

It catalyses the reaction shikimate + NADP(+) = 3-dehydroshikimate + NADPH + H(+). The protein operates within metabolic intermediate biosynthesis; chorismate biosynthesis; chorismate from D-erythrose 4-phosphate and phosphoenolpyruvate: step 4/7. In terms of biological role, involved in the biosynthesis of the chorismate, which leads to the biosynthesis of aromatic amino acids. Catalyzes the reversible NADPH linked reduction of 3-dehydroshikimate (DHSA) to yield shikimate (SA). This chain is Shikimate dehydrogenase (NADP(+)), found in Cereibacter sphaeroides (strain ATCC 17029 / ATH 2.4.9) (Rhodobacter sphaeroides).